The primary structure comprises 141 residues: MNVLKLLCKYHVDINISSHSSGRTSLHYAVLFNHKRALSFLLARGADVFKKDACMCTPLYYAMLSDQRDMVTMLLHSKKYIVKFRNKLDLHNAIETGNIKVIKTLLDNGVNENSVDKDGLTPLHYAVKYGNISIVKMFVIR.

ANK repeat units lie at residues 21–50 (SGRT…DVFK), 54–83 (CMCT…YIVK), 85–114 (RNKL…NENS), and 118–140 (DGLT…MFVI).

In Vertebrata (FPV), this protein is Putative ankyrin repeat protein FPV223.